We begin with the raw amino-acid sequence, 1202 residues long: Protein HASTY 1 (1202 aa).

At Met-1 the chain carries N-acetylmethionine.

Belongs to the exportin family. In terms of assembly, interacts with RAN1. Expressed in roots, leaves and floral buds.

Its subcellular location is the nucleus. Its function is as follows. Nucleocytoplasmic transporter involved in the nuclear export of microRNAs (miRNAs). Required for several miRNAs accumulation. Specifically required for miR156 accumulation which targets SPL3, SPL4 and SPL5 transcription factors. Involved in plant development through its role in miRNAs processing. Required for vegetative phase change and vegetative to reproductive phase transition. Functionally dependent on RAN1 binding. Does not seem to be involved in small interfering RNAs (siRNAs) processing. This chain is Protein HASTY 1 (HST1), found in Arabidopsis thaliana (Mouse-ear cress).